Here is a 101-residue protein sequence, read N- to C-terminus: Precursor of CEP6 (101 aa).

The first 26 residues, 1 to 26 (MKLSVYIILSILFISTVFYEIQFTEA), serve as a signal peptide directing secretion. The propeptide occupies 27–48 (RQLRKTDDQDHDDHHFTVGYTD). Residues 29–42 (LRKTDDQDHDDHHF) are compositionally biased toward basic and acidic residues. The interval 29 to 101 (LRKTDDQDHD…HAVKNNEPNA (73 aa)) is disordered. Hydroxyproline occurs at positions 52, 55, and 59. A propeptide spanning residues 64–77 (KMKENEENAGGYKD) is cleaved from the precursor. The span at 64 to 79 (KMKENEENAGGYKDDF) shows a compositional bias: basic and acidic residues. Pro-81, Pro-84, and Pro-88 each carry hydroxyproline. The propeptide occupies 93–101 (AVKNNEPNA).

This sequence belongs to the C-terminally encoded plant signaling peptide (CEP) family. Interacts with CEP receptors (e.g. CEPR1 and CEPR2). In terms of processing, the mature small signaling peptide is generated by proteolytic processing of the longer precursor. Expressed in lateral root primordia and in lateral roots excluding the meristem region. Also present in the aerial tissues, such as leaf petioles and the shoot apex region.

It localises to the secreted. The protein resides in the extracellular space. It is found in the apoplast. Its function is as follows. Extracellular signaling peptide that represses primary root growth rate. Modulates leaf morphology. Regulates systemic nitrogen (N)-demand signaling. Mediates up-regulation of genes involved in N uptake and assimilation pathways. This is Precursor of CEP6 from Arabidopsis thaliana (Mouse-ear cress).